The sequence spans 239 residues: Ribonuclease PH (239 aa).

Residues Arg87 and 125–127 (GTR) each bind phosphate.

Belongs to the RNase PH family. As to quaternary structure, homohexameric ring arranged as a trimer of dimers.

It carries out the reaction tRNA(n+1) + phosphate = tRNA(n) + a ribonucleoside 5'-diphosphate. Phosphorolytic 3'-5' exoribonuclease that plays an important role in tRNA 3'-end maturation. Removes nucleotide residues following the 3'-CCA terminus of tRNAs; can also add nucleotides to the ends of RNA molecules by using nucleoside diphosphates as substrates, but this may not be physiologically important. Probably plays a role in initiation of 16S rRNA degradation (leading to ribosome degradation) during starvation. This chain is Ribonuclease PH, found in Azotobacter vinelandii (strain DJ / ATCC BAA-1303).